The chain runs to 247 residues: Enolase-phosphatase E1 (247 aa).

The Mg(2+) site is built by Asp12 and Glu14. Residues 141–142 and Lys175 contribute to the substrate site; that span reads SS. Asp200 is a Mg(2+) binding site.

The protein belongs to the HAD-like hydrolase superfamily. MasA/MtnC family. In terms of assembly, monomer. It depends on Mg(2+) as a cofactor.

Its subcellular location is the cytoplasm. It localises to the nucleus. The catalysed reaction is 5-methylsulfanyl-2,3-dioxopentyl phosphate + H2O = 1,2-dihydroxy-5-(methylsulfanyl)pent-1-en-3-one + phosphate. Its pathway is amino-acid biosynthesis; L-methionine biosynthesis via salvage pathway; L-methionine from S-methyl-5-thio-alpha-D-ribose 1-phosphate: step 3/6. The protein operates within amino-acid biosynthesis; L-methionine biosynthesis via salvage pathway; L-methionine from S-methyl-5-thio-alpha-D-ribose 1-phosphate: step 4/6. Its function is as follows. Bifunctional enzyme that catalyzes the enolization of 2,3-diketo-5-methylthiopentyl-1-phosphate (DK-MTP-1-P) into the intermediate 2-hydroxy-3-keto-5-methylthiopentenyl-1-phosphate (HK-MTPenyl-1-P), which is then dephosphorylated to form the acireductone 1,2-dihydroxy-3-keto-5-methylthiopentene (DHK-MTPene). The sequence is that of Enolase-phosphatase E1 from Drosophila willistoni (Fruit fly).